Reading from the N-terminus, the 112-residue chain is UPF0482 protein SG1468 (112 aa).

Residues M1–A22 form the signal peptide.

This sequence belongs to the UPF0482 family.

This chain is UPF0482 protein SG1468, found in Sodalis glossinidius (strain morsitans).